A 425-amino-acid polypeptide reads, in one-letter code: Serine--tRNA ligase (425 aa).

A disordered region spans residues 41–70; sequence TERSQLQARSNQVGKQVGEKIKSGSDPKGT. A compositionally biased stretch (polar residues) spans 44-54; it reads SQLQARSNQVG. Positions 57–70 are enriched in basic and acidic residues; that stretch reads VGEKIKSGSDPKGT. 234 to 236 serves as a coordination point for L-serine; that stretch reads TSE. 265-267 lines the ATP pocket; that stretch reads RRE. An L-serine-binding site is contributed by Glu-288. 352–355 is an ATP binding site; it reads EISS. Ser-388 serves as a coordination point for L-serine.

This sequence belongs to the class-II aminoacyl-tRNA synthetase family. Type-1 seryl-tRNA synthetase subfamily. Homodimer. The tRNA molecule binds across the dimer.

It localises to the cytoplasm. The catalysed reaction is tRNA(Ser) + L-serine + ATP = L-seryl-tRNA(Ser) + AMP + diphosphate + H(+). The enzyme catalyses tRNA(Sec) + L-serine + ATP = L-seryl-tRNA(Sec) + AMP + diphosphate + H(+). It participates in aminoacyl-tRNA biosynthesis; selenocysteinyl-tRNA(Sec) biosynthesis; L-seryl-tRNA(Sec) from L-serine and tRNA(Sec): step 1/1. In terms of biological role, catalyzes the attachment of serine to tRNA(Ser). Is also able to aminoacylate tRNA(Sec) with serine, to form the misacylated tRNA L-seryl-tRNA(Sec), which will be further converted into selenocysteinyl-tRNA(Sec). In Trichodesmium erythraeum (strain IMS101), this protein is Serine--tRNA ligase.